The following is a 191-amino-acid chain: MFNEREALRLRLEQLNEAEVKVIREYQIERDKIYAKLRELDRNGSPSEIKKDFRSEKKPDSLPVLAELAAQEIRSYQPQSQQQSVQPQLQSISSLPAGIPDGTTRRRRGTARPGSKAAKLREAAIKTLKRHNAAIKSSELQKEIEKESGLEIPNMTTFMQSLIKMYPEVKKPYRGQYILEGEIESAESANE.

The stretch at F2–N43 forms a coiled coil. Residues S75–P96 show a composition bias toward low complexity. The interval S75–K116 is disordered. The DNA-binding stretch occupies residues L95–E191.

It localises to the cytoplasm. The protein resides in the nucleoid. Its function is as follows. Repressor of comK, the master regulator of competence development. Overexpression seems to be lethal. Represses at least 20 genes that specify membrane-localized and secreted proteins, including some that encode products with antibiotic activity. Binds to many AT-rich sites in the chromosome, many of which are known or thought to derive from horizontal gene transfer; helps keep mobile element ICEBs1 quiescent in the genome. Binds to its own promoter and is thus probably autoregulatory. This is Repressor Rok from Bacillus subtilis (strain 168).